The following is a 435-amino-acid chain: NADH-quinone oxidoreductase subunit D (435 aa).

It belongs to the complex I 49 kDa subunit family. NDH-1 is composed of 14 different subunits. Subunits NuoB, C, D, E, F, and G constitute the peripheral sector of the complex.

The protein resides in the cell inner membrane. It carries out the reaction a quinone + NADH + 5 H(+)(in) = a quinol + NAD(+) + 4 H(+)(out). NDH-1 shuttles electrons from NADH, via FMN and iron-sulfur (Fe-S) centers, to quinones in the respiratory chain. The immediate electron acceptor for the enzyme in this species is believed to be ubiquinone. Couples the redox reaction to proton translocation (for every two electrons transferred, four hydrogen ions are translocated across the cytoplasmic membrane), and thus conserves the redox energy in a proton gradient. The sequence is that of NADH-quinone oxidoreductase subunit D from Xanthomonas axonopodis pv. citri (strain 306).